We begin with the raw amino-acid sequence, 176 residues long: ATP-dependent protease subunit HslV (176 aa).

Thr-5 is an active-site residue. Na(+) is bound by residues Ser-161, Cys-164, and Thr-167.

The protein belongs to the peptidase T1B family. HslV subfamily. As to quaternary structure, a double ring-shaped homohexamer of HslV is capped on each side by a ring-shaped HslU homohexamer. The assembly of the HslU/HslV complex is dependent on binding of ATP.

It localises to the cytoplasm. The catalysed reaction is ATP-dependent cleavage of peptide bonds with broad specificity.. With respect to regulation, allosterically activated by HslU binding. Protease subunit of a proteasome-like degradation complex believed to be a general protein degrading machinery. This Thermoanaerobacter sp. (strain X514) protein is ATP-dependent protease subunit HslV.